A 74-amino-acid polypeptide reads, in one-letter code: Spore germination protein GerE (74 aa).

Residues glutamate 5–glycine 70 form the HTH luxR-type domain. The H-T-H motif DNA-binding region spans threonine 29–serine 48.

Involved in the regulation of spore formation. Directs the transcription of several genes that encode structural components of the protein coat that encases the mature spore (CotB, CotC, CotG, CotS, CotV, CotW, CotX, CotY and CotZ). Also controls the cgeAB and cgeCDE operons. In Bacillus subtilis (strain 168), this protein is Spore germination protein GerE (gerE).